A 592-amino-acid chain; its full sequence is A-type ATP synthase subunit A (592 aa).

ATP is bound at residue 233–240; it reads GPFGSGKT.

Belongs to the ATPase alpha/beta chains family. In terms of assembly, has multiple subunits with at least A(3), B(3), C, D, E, F, H, I and proteolipid K(x).

It is found in the cell membrane. It catalyses the reaction ATP + H2O + 4 H(+)(in) = ADP + phosphate + 5 H(+)(out). In terms of biological role, component of the A-type ATP synthase that produces ATP from ADP in the presence of a proton gradient across the membrane. The A chain is the catalytic subunit. This Saccharolobus islandicus (strain L.S.2.15 / Lassen #1) (Sulfolobus islandicus) protein is A-type ATP synthase subunit A.